The chain runs to 187 residues: Large ribosomal subunit protein uL6 (187 aa).

This sequence belongs to the universal ribosomal protein uL6 family. As to quaternary structure, part of the 50S ribosomal subunit.

In terms of biological role, this protein binds to the 23S rRNA, and is important in its secondary structure. It is located near the subunit interface in the base of the L7/L12 stalk, and near the tRNA binding site of the peptidyltransferase center. In Roseiflexus castenholzii (strain DSM 13941 / HLO8), this protein is Large ribosomal subunit protein uL6.